Consider the following 372-residue polypeptide: Putative neuropeptide precursor protein (372 aa).

The signal sequence occupies residues 1–17 (MLLFSLTAITAVLAVSA). Disordered stretches follow at residues 18-89 (VPTP…SNGE) and 136-208 (VTKS…KRDS). Residues 19–31 (PTPSNNKDGSTIS) are compositionally biased toward polar residues. A compositionally biased stretch (basic and acidic residues) spans 38-57 (DQTKDDNRSLFLNKSDKNDL). Residues 72 to 89 (GYDQTVDQRFDSPQSNGE) are compositionally biased toward polar residues. A compositionally biased stretch (low complexity) spans 177–191 (GGAAASAKTATKNSG).

May be proteolytically processed to give rise to a number of active peptides. As to expression, detected in the brain and frontal ganglion and in the axons connecting to the corpus cardiacum and corpus allatum (at protein level). Detected in the brain-subesophageal ganglion (brain-SG) complex, fat body, midgut and ovary. Expression in the brain-SG complex is 2-3 times higher than in the other tissues.

It localises to the cytoplasm. The protein resides in the secreted. The protein is Putative neuropeptide precursor protein of Bombyx mori (Silk moth).